Consider the following 72-residue polypeptide: Mitochondrial import receptor subunit TOM7-1 (72 aa).

The Cytoplasmic portion of the chain corresponds to 2–41 (LKPKGKNTKKAAAADEDDGAVAVVGKFVKEWGTWTAKKAK). A helical membrane pass occupies residues 42–59 (VITHYGFIPLVIIIGMNS). Over 60–72 (EPKPSLSQLLSPV) the chain is Mitochondrial intermembrane.

The protein belongs to the Tom7 family. In terms of assembly, forms part of the preprotein translocase complex of the outer mitochondrial membrane (TOM complex).

The protein localises to the mitochondrion outer membrane. Functionally, seems to act as a modulator of the dynamics of the mitochondrial protein transport machinery. Seems to promote the dissociation of subunits of the outer membrane translocase. The polypeptide is Mitochondrial import receptor subunit TOM7-1 (TOM7-1) (Solanum tuberosum (Potato)).